The primary structure comprises 224 residues: Leucyl/phenylalanyl-tRNA--protein transferase (224 aa).

The protein belongs to the L/F-transferase family.

Its subcellular location is the cytoplasm. It catalyses the reaction N-terminal L-lysyl-[protein] + L-leucyl-tRNA(Leu) = N-terminal L-leucyl-L-lysyl-[protein] + tRNA(Leu) + H(+). The catalysed reaction is N-terminal L-arginyl-[protein] + L-leucyl-tRNA(Leu) = N-terminal L-leucyl-L-arginyl-[protein] + tRNA(Leu) + H(+). It carries out the reaction L-phenylalanyl-tRNA(Phe) + an N-terminal L-alpha-aminoacyl-[protein] = an N-terminal L-phenylalanyl-L-alpha-aminoacyl-[protein] + tRNA(Phe). Functionally, functions in the N-end rule pathway of protein degradation where it conjugates Leu, Phe and, less efficiently, Met from aminoacyl-tRNAs to the N-termini of proteins containing an N-terminal arginine or lysine. This is Leucyl/phenylalanyl-tRNA--protein transferase from Rhodopseudomonas palustris (strain HaA2).